Here is a 102-residue protein sequence, read N- to C-terminus: Small ribosomal subunit protein bS20 (102 aa).

This sequence belongs to the bacterial ribosomal protein bS20 family.

In terms of biological role, binds directly to 16S ribosomal RNA. This Gloeobacter violaceus (strain ATCC 29082 / PCC 7421) protein is Small ribosomal subunit protein bS20.